Reading from the N-terminus, the 418-residue chain is Failed axon connections (418 aa).

Disordered regions lie at residues 1–95 (MASE…QKFN) and 361–418 (AHIP…EETK). 2 stretches are compositionally biased toward low complexity: residues 9–19 (PAEETPAVAAA) and 28–45 (SAAPPADSAAAPAAAPAV). Composition is skewed to basic and acidic residues over residues 46–77 (EKAEDADGEKKDGEAGKQDKQQDGEEPKKDEA) and 364–418 (PKPE…EETK).

It belongs to the FAX family.

Together with Abl, involved in embryonic axonal development. This chain is Failed axon connections (fax), found in Drosophila melanogaster (Fruit fly).